Consider the following 97-residue polypeptide: Secreted Ly-6/uPAR domain-containing protein 2 (97 aa).

Positions 1–22 (MQFHTGLLLAAVLSLQLAAAQA) are cleaved as a signal peptide. One can recognise a UPAR/Ly6 domain in the interval 23–95 (LWCHQCTGFG…IACCQTSLCN (73 aa)). 5 disulfide bridges follow: C25–C47, C28–C34, C40–C68, C72–C88, and C89–C94.

In terms of assembly, interacts with CHRNA3, CHRNA4, CHRNA5, CHRNA7, CHRNB2 and CHRNB4. Interacts with CHRM1 and CHRM3 probably in an allosteric manner.

It localises to the secreted. In terms of biological role, binds and may modulate the functional properties of nicotinic and muscarinic acetylcholine receptors. May regulate keratinocytes proliferation, differentiation and apoptosis. In vitro moderately inhibits ACh-evoked currents of alpha-3:beta-2-containing nAChRs, strongly these of alpha-4:beta-2-containing nAChRs, modulates alpha-7-containing nAChRs, and inhibits nicotine-induced signaling probably implicating alpha-3:beta-4-containing nAChRs. Proposed to act on alpha-3:beta-2 and alpha-7 nAChRs in an orthosteric, and on mAChRs, such as CHRM1 and CHRM3, in an allosteric manner. The chain is Secreted Ly-6/uPAR domain-containing protein 2 from Macaca mulatta (Rhesus macaque).